We begin with the raw amino-acid sequence, 701 residues long: Elongation factor G 1 (701 aa).

One can recognise a tr-type G domain in the interval 8–290 (VRYRNIGICA…AVVEYLPAPT (283 aa)). GTP-binding positions include 17-24 (AHVDAGKT), 88-92 (DTPGH), and 142-145 (NKMD).

Belongs to the TRAFAC class translation factor GTPase superfamily. Classic translation factor GTPase family. EF-G/EF-2 subfamily.

It localises to the cytoplasm. In terms of biological role, catalyzes the GTP-dependent ribosomal translocation step during translation elongation. During this step, the ribosome changes from the pre-translocational (PRE) to the post-translocational (POST) state as the newly formed A-site-bound peptidyl-tRNA and P-site-bound deacylated tRNA move to the P and E sites, respectively. Catalyzes the coordinated movement of the two tRNA molecules, the mRNA and conformational changes in the ribosome. This Saccharophagus degradans (strain 2-40 / ATCC 43961 / DSM 17024) protein is Elongation factor G 1.